The sequence spans 114 residues: Protein vCCL3 (114 aa).

The first 26 residues, 1–26 (MWSMCWVLRAHLGLLFWVAVIELCAA), serve as a signal peptide directing secretion.

Its function is as follows. Acts as a highly selective agonist for human lymphoactin receptor XCR1. This is Protein vCCL3 (K4.1) from Human herpesvirus 8 type P (isolate GK18) (HHV-8).